A 210-amino-acid chain; its full sequence is Urease accessory protein UreF (210 aa).

It belongs to the UreF family. UreD, UreF and UreG form a complex that acts as a GTP-hydrolysis-dependent molecular chaperone, activating the urease apoprotein by helping to assemble the nickel containing metallocenter of UreC. The UreE protein probably delivers the nickel.

The protein localises to the cytoplasm. Functionally, required for maturation of urease via the functional incorporation of the urease nickel metallocenter. This chain is Urease accessory protein UreF, found in Dinoroseobacter shibae (strain DSM 16493 / NCIMB 14021 / DFL 12).